A 490-amino-acid polypeptide reads, in one-letter code: Serine palmitoyltransferase 2 (490 aa).

A helical transmembrane segment spans residues 10 to 30 (VDDVGYLPILFLYIAYAFIIF). N6-(pyridoxal phosphate)lysine is present on lysine 321.

The protein belongs to the class-II pyridoxal-phosphate-dependent aminotransferase family. As to quaternary structure, forms a heterodimer with sptA. Requires pyridoxal 5'-phosphate as cofactor.

Its subcellular location is the endoplasmic reticulum membrane. The enzyme catalyses L-serine + hexadecanoyl-CoA + H(+) = 3-oxosphinganine + CO2 + CoA. The protein operates within lipid metabolism; sphingolipid metabolism. In terms of biological role, catalytic subunit of serine palmitoyltransferase (SPT), which catalyzes the committed step in the synthesis of sphingolipids, the condensation of serine with palmitoyl CoA to form the long chain base 3-ketosphinganine. The sequence is that of Serine palmitoyltransferase 2 (sptB) from Dictyostelium discoideum (Social amoeba).